The chain runs to 552 residues: Leiomodin-2 (552 aa).

The interaction with tropomyosin alpha stretch occupies residues 1-47 (MSTFGYRRELSKYEDIDEDELLASLTEEELKELERELEDIEPDRNLP). Interaction with actin stretches follow at residues 1–169 (MSTF…SSHV) and 170–498 (RHKK…KEIK). Residues 13–46 (YEDIDEDELLASLTEEELKELERELEDIEPDRNL) are a coiled coil. Disordered stretches follow at residues 33–67 (LERE…FSRE), 87–191 (GACE…DGKD), and 364–531 (MDKQ…DNLM). Polar residues predominate over residues 51 to 64 (RQKSLTEKTPTGTF). Positions 86–151 (LGACEKDSEQ…DDEDEEKQNS (66 aa)) form a coiled coil. Composition is skewed to acidic residues over residues 93-108 (SEQE…EECF) and 115-147 (VSEE…EDEE). Basic and acidic residues predominate over residues 364–377 (MDKQRQKRMQEQRQ). Residues 398–415 (PRSSPYTSPKSSPWSSPK) show a composition bias toward low complexity. Positions 425–450 (SQPPAPAPPPPPPPPPPPPPPPPPVI) are enriched in pro residues. Basic residues predominate over residues 478–488 (QKKKKGKKGKK). Residues 489–513 (HENSILKEIKDSLKSVSDRKSEEGS) are compositionally biased toward basic and acidic residues. Residues 514 to 524 (RPSTRPSTPQR) are compositionally biased toward polar residues. Positions 526–545 (LHDNLMEAIRASSIKQLRRV) are interaction with actin 3. In terms of domain architecture, WH2 spans 526–545 (LHDNLMEAIRASSIKQLRRV).

This sequence belongs to the tropomodulin family. Can bind at least three actin monomers and thereby provides a nucleus for actin filament formation. Interacts (via N-terminus) with tropomyosin alpha (TPM1) (via N-terminus). May also interact with TPM2 (via N-terminus).

It localises to the cytoplasm. It is found in the myofibril. The protein resides in the sarcomere. Its subcellular location is the m line. The protein localises to the cytoskeleton. In terms of biological role, mediates nucleation of actin filaments and thereby promotes actin polymerization. Plays a role in the regulation of actin filament length. Required for normal sarcomere organization in the heart, and for normal heart function. The polypeptide is Leiomodin-2 (LMOD2) (Gallus gallus (Chicken)).